The primary structure comprises 227 residues: MSVLPPNRSQTGWPRGVNQFGNKYLQQTKPLTLERTINLYPLTNYTFGTKEPLYEKDSSVAARFQRMREEFDKIGMRRTVEGVLIVHEHRLPHVLLLQLGTTFFKLPGGELNPGEDEVEGLKRLMTEILGRQDGVQQDWVIDDCIGNWWRPNFEPPQYPYIPAHITKPKEHKKLFLVQLQEKALFAVPKNYKLVAAPLFELYDNAPGYGPIISSLPQLLSRFNFIYN.

In terms of domain architecture, Nudix hydrolase spans 76–201; that stretch reads MRRTVEGVLI…KLVAAPLFEL (126 aa). Residues 102–104 form an interaction with RNA region; that stretch reads TFF. The Nudix box motif lies at 109–130; sequence GELNPGEDEVEGLKRLMTEILG.

This sequence belongs to the Nudix hydrolase family. CPSF5 subfamily. Homodimer (via N- and C-terminus); binds RNA as homodimer. Component of the cleavage factor Im (CFIm) complex.

It is found in the nucleus. The protein resides in the cytoplasm. Functionally, component of the cleavage factor Im (CFIm) complex that functions as an activator of the pre-mRNA 3'-end cleavage and polyadenylation processing required for the maturation of pre-mRNA into functional mRNAs. CFIm contributes to the recruitment of multiprotein complexes on specific sequences on the pre-mRNA 3'-end, so called cleavage and polyadenylation signals (pA signals). Most pre-mRNAs contain multiple pA signals, resulting in alternative cleavage and polyadenylation (APA) producing mRNAs with variable 3'-end formation. The CFIm complex acts as a key regulator of cleavage and polyadenylation site choice during APA through its binding to 5'-UGUA-3' elements localized in the 3'-untranslated region (UTR) for a huge number of pre-mRNAs. Binds to 5'-UGUA-3' elements localized upstream of pA signals that act as enhancers of pre-mRNA 3'-end processing. The homodimer mediates simultaneous sequence-specific recognition of two 5'-UGUA-3' elements within the pre-mRNA. Plays a role in somatic cell fate transitions and pluripotency by regulating widespread changes in gene expression through an APA-dependent function. Binds to chromatin. Binds to, but does not hydrolyze mono- and di-adenosine nucleotides. The chain is Cleavage and polyadenylation specificity factor subunit 5 from Xenopus laevis (African clawed frog).